The sequence spans 617 residues: Cytoplasmic polyadenylation element-binding protein 1 (617 aa).

The tract at residues 1-38 (MQSQLKACGDAPAPSCSLHHRRTISKKPSNGGNSGGGG) is disordered. 2 RRM domains span residues 273–377 (RKVF…AWRL) and 394–465 (RTVF…HADT). 2 disordered regions span residues 534–568 (DQTR…QNVT) and 592–617 (NQNN…AIGY). Residues 542–563 (PPHHSTSHYHHRSTPSHHHNHT) are compositionally biased toward basic residues.

In terms of assembly, interacts with fbf-1.

Cytoplasmic polyadenylation element binding protein that binds to and regulates the translation of specific mRNAs. Essential for progression through meiosis. Involved in spermatogenesis. This chain is Cytoplasmic polyadenylation element-binding protein 1 (cpb-1), found in Caenorhabditis japonica.